The sequence spans 284 residues: Diaminopimelate epimerase (284 aa).

N14 and N67 together coordinate substrate. The active-site Proton donor is C76. Substrate-binding positions include 77-78 (GN), N166, N199, and 217-218 (ER). C226 (proton acceptor) is an active-site residue. A substrate-binding site is contributed by 227 to 228 (GT).

It belongs to the diaminopimelate epimerase family. Homodimer.

Its subcellular location is the cytoplasm. It catalyses the reaction (2S,6S)-2,6-diaminopimelate = meso-2,6-diaminopimelate. It participates in amino-acid biosynthesis; L-lysine biosynthesis via DAP pathway; DL-2,6-diaminopimelate from LL-2,6-diaminopimelate: step 1/1. Its function is as follows. Catalyzes the stereoinversion of LL-2,6-diaminopimelate (L,L-DAP) to meso-diaminopimelate (meso-DAP), a precursor of L-lysine and an essential component of the bacterial peptidoglycan. This Bacillus subtilis (strain 168) protein is Diaminopimelate epimerase.